A 297-amino-acid polypeptide reads, in one-letter code: Homoserine kinase (297 aa).

ATP is bound at residue 82-92 (PLTRGLGSSAS).

The protein belongs to the GHMP kinase family. Homoserine kinase subfamily.

The protein localises to the cytoplasm. The enzyme catalyses L-homoserine + ATP = O-phospho-L-homoserine + ADP + H(+). The protein operates within amino-acid biosynthesis; L-threonine biosynthesis; L-threonine from L-aspartate: step 4/5. In terms of biological role, catalyzes the ATP-dependent phosphorylation of L-homoserine to L-homoserine phosphate. The protein is Homoserine kinase of Bacillus mycoides (strain KBAB4) (Bacillus weihenstephanensis).